Consider the following 317-residue polypeptide: Pantothenate kinase (317 aa).

Residue 99-106 (GSVSVGKS) coordinates ATP.

The protein belongs to the prokaryotic pantothenate kinase family.

It is found in the cytoplasm. The catalysed reaction is (R)-pantothenate + ATP = (R)-4'-phosphopantothenate + ADP + H(+). It functions in the pathway cofactor biosynthesis; coenzyme A biosynthesis; CoA from (R)-pantothenate: step 1/5. This Histophilus somni (strain 2336) (Haemophilus somnus) protein is Pantothenate kinase.